Reading from the N-terminus, the 613-residue chain is Laccase 1 (613 aa).

An N-terminal signal peptide occupies residues 1–20 (MSSSVRLLLIVALLYTNSWA). Plastocyanin-like domains lie at 29 to 142 (ITWE…IRPK), 171 to 359 (YLVV…MRVP), and 468 to 598 (DATC…ILDG). N74 carries N-linked (GlcNAc...) asparagine glycosylation. H78, H80, H122, and H124 together coordinate Cu cation. 3 N-linked (GlcNAc...) asparagine glycosylation sites follow: N256, N279, and N484. Cu cation-binding residues include H506, H509, and H511. N-linked (GlcNAc...) asparagine glycosylation occurs at N526. Residues H580, C581, H582, and H586 each contribute to the Cu cation site.

Belongs to the multicopper oxidase family. The cofactor is Cu cation.

The protein resides in the cell surface. It functions in the pathway pigment biosynthesis. Laccase; part of the Pks1 gene cluster that mediates the biosynthesis of an anthraquinone derivative pigment that contributes to conidial pigmentation that provides protection from UV radiation, heat and cold stress. The polyketide synthase Pks1 produces 1-acetyl-2,4,6,8-tetrahydroxy-9,10-anthraquinone though condensation of acetyl-CoA with malonyl-CoA. The dehydratase EthD and the laccase Mlac1 further convert the anthraquinone derivative into the final conidial pigment. This chain is Laccase 1, found in Metarhizium acridum (strain CQMa 102).